We begin with the raw amino-acid sequence, 245 residues long: 23S rRNA (guanosine-2'-O-)-methyltransferase RlmB (245 aa).

3 residues coordinate S-adenosyl-L-methionine: Gly-197, Ile-217, and Leu-226.

It belongs to the class IV-like SAM-binding methyltransferase superfamily. RNA methyltransferase TrmH family. RlmB subfamily.

Its subcellular location is the cytoplasm. It carries out the reaction guanosine(2251) in 23S rRNA + S-adenosyl-L-methionine = 2'-O-methylguanosine(2251) in 23S rRNA + S-adenosyl-L-homocysteine + H(+). Specifically methylates the ribose of guanosine 2251 in 23S rRNA. This Bordetella parapertussis (strain 12822 / ATCC BAA-587 / NCTC 13253) protein is 23S rRNA (guanosine-2'-O-)-methyltransferase RlmB.